A 653-amino-acid chain; its full sequence is Probable syringafactin export ATP-binding/permease protein SyfD (653 aa).

The region spanning 6-244 is the ABC transporter domain; it reads LELNGVTRRF…NEKTTERLPT (239 aa). An ATP-binding site is contributed by 42-49; the sequence is GASGSGKS. 5 helical membrane passes run 252-272, 278-298, 526-546, 583-603, and 616-636; these read LMAN…ALIS, LLTM…VAIG, LALL…IGVM, MVCL…GYVF, and LGSI…FGFV.

The protein belongs to the ABC transporter superfamily. Macrolide exporter (TC 3.A.1.122) family. Probably part of a tripartite efflux system, which is composed of an inner membrane transporter, a periplasmic membrane fusion protein, and an outer membrane component.

The protein resides in the cell inner membrane. Functionally, probably involved in the export of syringafactins. This chain is Probable syringafactin export ATP-binding/permease protein SyfD, found in Pseudomonas syringae pv. syringae (strain B728a).